A 237-amino-acid polypeptide reads, in one-letter code: Uridylate kinase (237 aa).

12–15 (KLSG) serves as a coordination point for ATP. An involved in allosteric activation by GTP region spans residues 20-25 (GEDGLG). UMP is bound at residue G54. ATP contacts are provided by G55 and R59. Residues D74 and 135-142 (TGNPFFTT) each bind UMP. The ATP site is built by T162, Y168, and D171.

Belongs to the UMP kinase family. Homohexamer.

The protein localises to the cytoplasm. It carries out the reaction UMP + ATP = UDP + ADP. Its pathway is pyrimidine metabolism; CTP biosynthesis via de novo pathway; UDP from UMP (UMPK route): step 1/1. Allosterically activated by GTP. Inhibited by UTP. In terms of biological role, catalyzes the reversible phosphorylation of UMP to UDP. This Haemophilus influenzae (strain PittEE) protein is Uridylate kinase.